The following is a 459-amino-acid chain: Glutamate--tRNA ligase 2 (459 aa).

Residues 8-18 (PSPTGYLHIGG) carry the 'HIGH' region motif. The 'KMSKS' region signature appears at 237–241 (KLSKR). K240 is an ATP binding site.

This sequence belongs to the class-I aminoacyl-tRNA synthetase family. Glutamate--tRNA ligase type 1 subfamily. In terms of assembly, monomer.

It localises to the cytoplasm. The catalysed reaction is tRNA(Glu) + L-glutamate + ATP = L-glutamyl-tRNA(Glu) + AMP + diphosphate. Catalyzes the attachment of glutamate to tRNA(Glu) in a two-step reaction: glutamate is first activated by ATP to form Glu-AMP and then transferred to the acceptor end of tRNA(Glu). This is Glutamate--tRNA ligase 2 from Campylobacter curvus (strain 525.92).